The chain runs to 723 residues: ATP-dependent zinc metalloprotease YME1 homolog (723 aa).

Residues 198-220 (LTRFYIFLVFCIFFGYLTGRIRV) form a helical membrane-spanning segment. Position 288-295 (288-295 (GPPGTGKT)) interacts with ATP. His-509 lines the Zn(2+) pocket. Residue Glu-510 is part of the active site. 2 residues coordinate Zn(2+): His-513 and Asp-587.

It in the N-terminal section; belongs to the AAA ATPase family. In the C-terminal section; belongs to the peptidase M41 family. It depends on Zn(2+) as a cofactor.

The protein localises to the mitochondrion inner membrane. It localises to the mitochondrion. ATP-dependent metalloprotease that catalyzes the degradation of folded and unfolded proteins with a suitable degron sequence in the mitochondrial intermembrane region. Plays an important role in regulating mitochondrial morphology and function. The sequence is that of ATP-dependent zinc metalloprotease YME1 homolog (ymel-1) from Caenorhabditis elegans.